A 318-amino-acid chain; its full sequence is Protein-methionine-sulfoxide reductase catalytic subunit MsrP (318 aa).

The tat-type signal signal peptide spans 1–40; sequence MNRFTRYDVTPEAIFNQRRQIIKAMGLGAAALSLPNIGFA. Residues N72, 75 to 76, C130, T165, N217, R222, and 233 to 235 contribute to the Mo-molybdopterin site; these read YE and SIK.

It belongs to the MsrP family. As to quaternary structure, heterodimer of a catalytic subunit (MsrP) and a heme-binding subunit (MsrQ). Mo-molybdopterin serves as cofactor. In terms of processing, predicted to be exported by the Tat system. The position of the signal peptide cleavage has not been experimentally proven.

It localises to the periplasm. It catalyses the reaction L-methionyl-[protein] + a quinone + H2O = L-methionyl-(S)-S-oxide-[protein] + a quinol. The enzyme catalyses L-methionyl-[protein] + a quinone + H2O = L-methionyl-(R)-S-oxide-[protein] + a quinol. Part of the MsrPQ system that repairs oxidized periplasmic proteins containing methionine sulfoxide residues (Met-O), using respiratory chain electrons. Thus protects these proteins from oxidative-stress damage caused by reactive species of oxygen and chlorine generated by the host defense mechanisms. MsrPQ is essential for the maintenance of envelope integrity under bleach stress, rescuing a wide series of structurally unrelated periplasmic proteins from methionine oxidation. The catalytic subunit MsrP is non-stereospecific, being able to reduce both (R-) and (S-) diastereoisomers of methionine sulfoxide. This is Protein-methionine-sulfoxide reductase catalytic subunit MsrP from Actinobacillus pleuropneumoniae serotype 5b (strain L20).